A 494-amino-acid polypeptide reads, in one-letter code: BTB/POZ domain and ankyrin repeat-containing protein NH5.2 (494 aa).

Residues 25–131 (SDVAFSVEGR…LYSGQASVAA (107 aa)) enclose the BTB domain. The interval 60-95 (NHQPPPPPPPPLNWPTAGGGGGGSGGGGRGGAGGGG) is disordered. Pro residues predominate over residues 61-72 (HQPPPPPPPPLN). Residues 76 to 95 (AGGGGGGSGGGGRGGAGGGG) show a composition bias toward gly residues. Residues 137-151 (LPGCGARGCWHTRCG) form a C2HC NPR-type zinc finger. Zn(2+) contacts are provided by cysteine 140, cysteine 145, histidine 147, and cysteine 150. 4 ANK repeats span residues 275 to 303 (NKIR…GLDL), 304 to 334 (DDAL…DVNS), 339 to 368 (TGKT…DPNS), and 372 to 406 (DGVT…KLRL). Disordered regions lie at residues 421-443 (DDGA…PRSD) and 471-494 (GEGR…NGFA).

Belongs to the plant 'ANKYRIN-BTB/POZ' family. 'NOOT-BOP-COCH-like' (NBCL) subfamily. Homodimer. Interacts with TGAL5, TGAL7, TGAL8 and TGAL9.

The protein localises to the nucleus. It is found in the cytoplasm. It functions in the pathway protein modification; protein ubiquitination. Functionally, may act as a substrate-specific adapter of an E3 ubiquitin-protein ligase complex (CUL3-RBX1-BTB) which mediates the ubiquitination and subsequent proteasomal degradation of target proteins. Transcriptional co-regulator involved in the promotion of leaf and floral meristem fate and determinacy. Required for the abscission of senescent organs, probably by regulating the cell wall disorganization in abscission zones (AZs, e.g. pulvini at the base of leaves). This Oryza sativa subsp. japonica (Rice) protein is BTB/POZ domain and ankyrin repeat-containing protein NH5.2.